The primary structure comprises 35 residues: Tau/kappa-theraphotoxin-Pc1a (35 aa).

Disulfide bonds link C3–C17, C10–C22, and C16–C29. F35 carries the post-translational modification Phenylalanine amide.

This sequence belongs to the neurotoxin 10 (Hwtx-1) family. 62 (Vatx) subfamily. Expressed by the venom gland.

The protein resides in the secreted. Its function is as follows. Selectively activates mammalian TRPV1, the capsaicin receptor, a non-selective cation channel expressed by sensory neurons of the pain pathway. Is less potent than VaTx2 and VaTx3. Interacts with distinct regions of the channel than capsaicin, since it only acts on the extracellular face of the channel, and capsaicin binds to the cytosolic side. Also activates avian TRPV1, which is insensitive to capsaicin. Significantly inhibits potassium channels Kv2.1/KCNB1. This chain is Tau/kappa-theraphotoxin-Pc1a, found in Psalmopoeus cambridgei (Trinidad chevron tarantula).